Reading from the N-terminus, the 369-residue chain is UPF0284 protein cce_1085 (369 aa).

This sequence belongs to the UPF0284 family.

The polypeptide is UPF0284 protein cce_1085 (Crocosphaera subtropica (strain ATCC 51142 / BH68) (Cyanothece sp. (strain ATCC 51142))).